The following is a 174-amino-acid chain: Protein C2-DOMAIN ABA-RELATED 6 (174 aa).

Positions Met1–His115 constitute a C2 domain. Residues Arg30, Asp31, Asp36, Asp82, Lys83, Asp84, and Asp90 each coordinate Ca(2+).

The protein belongs to the plant CAR protein family. Binds to PYR/PYL/RCAR abscisic acid intracellular receptors in an ABA-independent manner, both at the plasma membrane and in the nucleus. Subunit of a complex made of CAR6, PHOT1 and RPT3/NPH3. Interacts directly with RPT3/NPH3.

It is found in the cell membrane. The protein localises to the nucleus. Stimulates the GTPase/ATPase activities of Obg-like ATPases. Mediates the transient calcium-dependent interaction of PYR/PYL/RCAR abscisic acid (ABA) receptors with the plasma membrane and thus regulates ABA sensitivity. Prevents hypocotyl bending as well as gravitropic response under blue light conditions. In Arabidopsis thaliana (Mouse-ear cress), this protein is Protein C2-DOMAIN ABA-RELATED 6.